A 348-amino-acid polypeptide reads, in one-letter code: Small ribosomal subunit biogenesis GTPase RsgA (348 aa).

The segment at methionine 1–glutamine 32 is disordered. Positions lysine 106–phenylalanine 274 constitute a CP-type G domain. GTP contacts are provided by residues asparagine 162 to aspartate 165 and glycine 216 to serine 224. Cysteine 298, cysteine 303, histidine 305, and cysteine 311 together coordinate Zn(2+).

Belongs to the TRAFAC class YlqF/YawG GTPase family. RsgA subfamily. As to quaternary structure, monomer. Associates with 30S ribosomal subunit, binds 16S rRNA. Requires Zn(2+) as cofactor.

The protein localises to the cytoplasm. Its function is as follows. One of several proteins that assist in the late maturation steps of the functional core of the 30S ribosomal subunit. Helps release RbfA from mature subunits. May play a role in the assembly of ribosomal proteins into the subunit. Circularly permuted GTPase that catalyzes slow GTP hydrolysis, GTPase activity is stimulated by the 30S ribosomal subunit. The polypeptide is Small ribosomal subunit biogenesis GTPase RsgA (Actinobacillus succinogenes (strain ATCC 55618 / DSM 22257 / CCUG 43843 / 130Z)).